We begin with the raw amino-acid sequence, 258 residues long: Imidazole glycerol phosphate synthase subunit HisF (258 aa).

Residues D11 and D130 contribute to the active site.

This sequence belongs to the HisA/HisF family. As to quaternary structure, heterodimer of HisH and HisF.

The protein resides in the cytoplasm. The enzyme catalyses 5-[(5-phospho-1-deoxy-D-ribulos-1-ylimino)methylamino]-1-(5-phospho-beta-D-ribosyl)imidazole-4-carboxamide + L-glutamine = D-erythro-1-(imidazol-4-yl)glycerol 3-phosphate + 5-amino-1-(5-phospho-beta-D-ribosyl)imidazole-4-carboxamide + L-glutamate + H(+). It participates in amino-acid biosynthesis; L-histidine biosynthesis; L-histidine from 5-phospho-alpha-D-ribose 1-diphosphate: step 5/9. IGPS catalyzes the conversion of PRFAR and glutamine to IGP, AICAR and glutamate. The HisF subunit catalyzes the cyclization activity that produces IGP and AICAR from PRFAR using the ammonia provided by the HisH subunit. The protein is Imidazole glycerol phosphate synthase subunit HisF of Blochmanniella floridana.